We begin with the raw amino-acid sequence, 96 residues long: Large ribosomal subunit protein eL43 (96 aa).

The segment at 41–62 adopts a C4-type zinc-finger fold; the sequence is CPVCAFPKLKRAGTSIWVCEKC.

This sequence belongs to the eukaryotic ribosomal protein eL43 family. It depends on Zn(2+) as a cofactor.

In Methanococcus maripaludis (strain C5 / ATCC BAA-1333), this protein is Large ribosomal subunit protein eL43.